The following is a 238-amino-acid chain: Chromosome partition protein MukE (238 aa).

It belongs to the MukE family. In terms of assembly, interacts, and probably forms a ternary complex, with MukF and MukB. The complex formation is stimulated by calcium or magnesium.

The protein resides in the cytoplasm. The protein localises to the nucleoid. Functionally, involved in chromosome condensation, segregation and cell cycle progression. May participate in facilitating chromosome segregation by condensation DNA from both sides of a centrally located replisome during cell division. Probably acts via its interaction with MukB and MukF. The polypeptide is Chromosome partition protein MukE (Haemophilus ducreyi (strain 35000HP / ATCC 700724)).